We begin with the raw amino-acid sequence, 189 residues long: MTLAAYKEKMKELPLVSLFCSCFLSDPLNKSSYKYEADTVDLNWCVISDMEVIELNKCTSGQSFEVILKPPSFDGVPEFNASLPRRRDPSLEEIQKKLEAAEERRKYQEAELLKHLAEKREHEREVIQKAIEENNNFIKMAKEKLAQKMESNKENREAHLAAMLERLQEKDKHAEEVRKNKELKEEASR.

S-palmitoyl cysteine attachment occurs at residues Cys-20 and Cys-22. Positions 48-189 constitute an SLD domain; the sequence is SDMEVIELNK…NKELKEEASR (142 aa). Phosphoserine occurs at positions 54 and 90. Residues 90-189 are a coiled coil; it reads SLEEIQKKLE…NKELKEEASR (100 aa). Residues 168-189 form a disordered region; sequence QEKDKHAEEVRKNKELKEEASR.

The protein belongs to the stathmin family. In terms of tissue distribution, nervous tissue.

It localises to the golgi apparatus. It is found in the cell projection. The protein resides in the growth cone. The protein localises to the axon. Its function is as follows. Exhibits microtubule-destabilizing activity. This is Stathmin-4 (Stmn4) from Rattus norvegicus (Rat).